We begin with the raw amino-acid sequence, 283 residues long: 4-diphosphocytidyl-2-C-methyl-D-erythritol kinase (283 aa).

Lys10 is a catalytic residue. Position 99-109 (99-109 (PMGGGLGGGSS)) interacts with ATP. The active site involves Asp141.

It belongs to the GHMP kinase family. IspE subfamily. In terms of assembly, homodimer.

The enzyme catalyses 4-CDP-2-C-methyl-D-erythritol + ATP = 4-CDP-2-C-methyl-D-erythritol 2-phosphate + ADP + H(+). It participates in isoprenoid biosynthesis; isopentenyl diphosphate biosynthesis via DXP pathway; isopentenyl diphosphate from 1-deoxy-D-xylulose 5-phosphate: step 3/6. Functionally, catalyzes the phosphorylation of the position 2 hydroxy group of 4-diphosphocytidyl-2C-methyl-D-erythritol. In Salmonella typhi, this protein is 4-diphosphocytidyl-2-C-methyl-D-erythritol kinase.